We begin with the raw amino-acid sequence, 296 residues long: Ribosomal RNA small subunit methyltransferase A (296 aa).

Residues asparagine 31, leucine 33, glycine 58, glutamate 79, aspartate 104, and asparagine 129 each coordinate S-adenosyl-L-methionine.

The protein belongs to the class I-like SAM-binding methyltransferase superfamily. rRNA adenine N(6)-methyltransferase family. RsmA subfamily.

Its subcellular location is the cytoplasm. It catalyses the reaction adenosine(1518)/adenosine(1519) in 16S rRNA + 4 S-adenosyl-L-methionine = N(6)-dimethyladenosine(1518)/N(6)-dimethyladenosine(1519) in 16S rRNA + 4 S-adenosyl-L-homocysteine + 4 H(+). Specifically dimethylates two adjacent adenosines (A1518 and A1519) in the loop of a conserved hairpin near the 3'-end of 16S rRNA in the 30S particle. May play a critical role in biogenesis of 30S subunits. This chain is Ribosomal RNA small subunit methyltransferase A, found in Shouchella clausii (strain KSM-K16) (Alkalihalobacillus clausii).